The sequence spans 737 residues: Alpha-adducin (737 aa).

The residue at position 1 (Met-1) is an N-acetylmethionine. A disordered region spans residues 1–21 (MNGDSRAAVVTSPPPTTAPHK). Ser-12 bears the Phosphoserine mark. A Phosphoserine; by PKA modification is found at Ser-59. The residue at position 64 (Ser-64) is a Phosphoserine. Thr-331 is modified (phosphothreonine). Residues Ser-334, Ser-353, Ser-355, Ser-358, and Ser-366 each carry the phosphoserine modification. Phosphoserine; by PKA is present on Ser-408. A compositionally biased stretch (polar residues) spans 419-430 (YSFTSDGDSGTC). Disordered stretches follow at residues 419-490 (YSFT…NLFV) and 576-737 (RREV…KSES). Ser-427 carries the phosphoserine modification. A Phosphothreonine modification is found at Thr-429. Ser-431 bears the Phosphoserine mark. At Ser-436 the chain carries Phosphoserine; by PKA. At Thr-445 the chain carries Phosphothreonine; by ROCK2. 2 positions are modified to phosphoserine: Ser-464 and Ser-465. Position 480 is a phosphothreonine; by ROCK2 (Thr-480). Ser-481 carries the post-translational modification Phosphoserine; by PKA. The segment covering 576-601 (RREVERKQKGSEENLDEAREQKEKSP) has biased composition (basic and acidic residues). Phosphoserine occurs at positions 586, 600, and 613. Residues 602 to 614 (PDQPAVPYPPPST) are compositionally biased toward pro residues. Residue Thr-614 is modified to Phosphothreonine. Ser-678, Ser-707, Ser-710, and Ser-714 each carry phosphoserine. The span at 687–714 (PVAEEAAPSAAEEGAAADPGSDGSPGKS) shows a compositional bias: low complexity. Residues 715-737 (PSKKKKKFRTPSFLKKSKKKSES) show a composition bias toward basic residues. A Phosphoserine; by PKC modification is found at Ser-716. Residues 717–734 (KKKKKFRTPSFLKKSKKK) form an interaction with calmodulin region. The residue at position 726 (Ser-726) is a Phosphoserine; by PKA and PKC.

Belongs to the aldolase class II family. Adducin subfamily. Heterodimer of an alpha and a beta subunit or an alpha and a gamma subunit.

The protein resides in the cytoplasm. It localises to the cytoskeleton. Its subcellular location is the cell membrane. Membrane-cytoskeleton-associated protein that promotes the assembly of the spectrin-actin network. Binds to calmodulin. The polypeptide is Alpha-adducin (ADD1) (Pongo abelii (Sumatran orangutan)).